We begin with the raw amino-acid sequence, 600 residues long: Elongation factor 4 (600 aa).

Positions 4–187 (KYIRNFSIVA…AIIEQIPPPL (184 aa)) constitute a tr-type G domain. GTP is bound by residues 16–21 (DHGKST) and 134–137 (NKID).

This sequence belongs to the TRAFAC class translation factor GTPase superfamily. Classic translation factor GTPase family. LepA subfamily.

Its subcellular location is the cell membrane. The enzyme catalyses GTP + H2O = GDP + phosphate + H(+). Functionally, required for accurate and efficient protein synthesis under certain stress conditions. May act as a fidelity factor of the translation reaction, by catalyzing a one-codon backward translocation of tRNAs on improperly translocated ribosomes. Back-translocation proceeds from a post-translocation (POST) complex to a pre-translocation (PRE) complex, thus giving elongation factor G a second chance to translocate the tRNAs correctly. Binds to ribosomes in a GTP-dependent manner. This chain is Elongation factor 4, found in Malacoplasma penetrans (strain HF-2) (Mycoplasma penetrans).